A 317-amino-acid chain; its full sequence is tRNA dimethylallyltransferase (317 aa).

14 to 21 provides a ligand contact to ATP; that stretch reads GPTASGKT. 16-21 provides a ligand contact to substrate; the sequence is TASGKT. Interaction with substrate tRNA stretches follow at residues 39–42, 163–167, and 248–253; these read DSAL, QRIQR, and RCVGYR.

It belongs to the IPP transferase family. As to quaternary structure, monomer. Requires Mg(2+) as cofactor.

It catalyses the reaction adenosine(37) in tRNA + dimethylallyl diphosphate = N(6)-dimethylallyladenosine(37) in tRNA + diphosphate. In terms of biological role, catalyzes the transfer of a dimethylallyl group onto the adenine at position 37 in tRNAs that read codons beginning with uridine, leading to the formation of N6-(dimethylallyl)adenosine (i(6)A). The chain is tRNA dimethylallyltransferase from Paraburkholderia phymatum (strain DSM 17167 / CIP 108236 / LMG 21445 / STM815) (Burkholderia phymatum).